We begin with the raw amino-acid sequence, 663 residues long: Protein-arginine deiminase type-1 (663 aa).

Positions 153, 155, 157, 165, 176, 179, 351, 353, 364, 371, 372, 375, 409, and 412 each coordinate Ca(2+). Cys645 functions as the Nucleophile in the catalytic mechanism.

This sequence belongs to the protein arginine deiminase family. Monomer. The cofactor is Ca(2+). Detected in epidermal keratinocytes (at protein level). Epidermis, prostate, testis, placenta, spleen and thymus.

Its subcellular location is the cytoplasm. It carries out the reaction L-arginyl-[protein] + H2O = L-citrullyl-[protein] + NH4(+). In terms of biological role, catalyzes the deimination of arginine residues of proteins. This chain is Protein-arginine deiminase type-1 (PADI1), found in Homo sapiens (Human).